Here is a 367-residue protein sequence, read N- to C-terminus: UDP-N-acetylglucosamine--N-acetylmuramyl-(pentapeptide) pyrophosphoryl-undecaprenol N-acetylglucosamine transferase (367 aa).

UDP-N-acetyl-alpha-D-glucosamine contacts are provided by residues 15-17 (TGG), N127, R163, S191, I249, and Q294.

This sequence belongs to the glycosyltransferase 28 family. MurG subfamily.

It is found in the cell inner membrane. It carries out the reaction di-trans,octa-cis-undecaprenyl diphospho-N-acetyl-alpha-D-muramoyl-L-alanyl-D-glutamyl-meso-2,6-diaminopimeloyl-D-alanyl-D-alanine + UDP-N-acetyl-alpha-D-glucosamine = di-trans,octa-cis-undecaprenyl diphospho-[N-acetyl-alpha-D-glucosaminyl-(1-&gt;4)]-N-acetyl-alpha-D-muramoyl-L-alanyl-D-glutamyl-meso-2,6-diaminopimeloyl-D-alanyl-D-alanine + UDP + H(+). It functions in the pathway cell wall biogenesis; peptidoglycan biosynthesis. Cell wall formation. Catalyzes the transfer of a GlcNAc subunit on undecaprenyl-pyrophosphoryl-MurNAc-pentapeptide (lipid intermediate I) to form undecaprenyl-pyrophosphoryl-MurNAc-(pentapeptide)GlcNAc (lipid intermediate II). The protein is UDP-N-acetylglucosamine--N-acetylmuramyl-(pentapeptide) pyrophosphoryl-undecaprenol N-acetylglucosamine transferase of Burkholderia cenocepacia (strain ATCC BAA-245 / DSM 16553 / LMG 16656 / NCTC 13227 / J2315 / CF5610) (Burkholderia cepacia (strain J2315)).